The primary structure comprises 535 residues: Sterol 26-hydroxylase, mitochondrial (535 aa).

Residues 1–36 (MAALGCARLRWALLGPRVAGCGLCPQGARAKAAIPT) constitute a mitochondrion transit peptide. At Lys-286 the chain carries N6-acetyllysine. The segment at 387-401 (PLLKAVLKETLRLYP) is sterol-binding. Cys-480 contacts heme. Position 524 is an N6-acetyllysine (Lys-524).

It belongs to the cytochrome P450 family. As to quaternary structure, interacts with HSP70; this interaction is required for initial targeting to mitochondria. Heme is required as a cofactor. As to expression, expressed in all tissues tested. Highest expression in liver and duodenum, followed by adrenal gland and lung. Low expression in kidney and spleen.

The protein localises to the mitochondrion inner membrane. It catalyses the reaction 5beta-cholestane-3alpha,7alpha,12alpha-triol + 6 reduced [adrenodoxin] + 3 O2 + 5 H(+) = (25R)-3alpha,7alpha,12alpha-trihydroxy-5beta-cholestan-26-oate + 6 oxidized [adrenodoxin] + 4 H2O. It carries out the reaction cholestanol + 2 reduced [adrenodoxin] + O2 + 2 H(+) = (25R)-26-hydroxycholestanol + 2 oxidized [adrenodoxin] + H2O. The catalysed reaction is (25R)-3beta-hydroxycholest-5-en-7-one-26-al + 2 reduced [adrenodoxin] + O2 + H(+) = (25R)-3beta-hydroxycholest-5-en-7-one-26-oate + 2 oxidized [adrenodoxin] + H2O. The enzyme catalyses (25R)-3beta,26-dihydroxycholest-5-en-7-one + 2 reduced [adrenodoxin] + O2 + 2 H(+) = (25R)-3beta-hydroxycholest-5-en-7-one-26-al + 2 oxidized [adrenodoxin] + 2 H2O. It catalyses the reaction 7-oxocholesterol + 2 reduced [adrenodoxin] + O2 + 2 H(+) = (25R)-3beta,26-dihydroxycholest-5-en-7-one + 2 oxidized [adrenodoxin] + H2O. It carries out the reaction calciol + 2 reduced [adrenodoxin] + O2 + 2 H(+) = calcidiol + 2 oxidized [adrenodoxin] + H2O. The catalysed reaction is (25R)-5beta-cholestane-3alpha,7alpha,12alpha,26-tetrol + 2 reduced [adrenodoxin] + O2 + 2 H(+) = (25R)-3alpha,7alpha,12alpha-trihydroxy-5beta-cholestan-26-al + 2 oxidized [adrenodoxin] + 2 H2O. The enzyme catalyses 2 reduced [adrenodoxin] + cholesterol + O2 + 2 H(+) = (25R)-cholest-5-ene-3beta,26-diol + 2 oxidized [adrenodoxin] + H2O. It catalyses the reaction (25R)-3beta,4beta-dihydroxycholest-5-en-26-al + 2 reduced [adrenodoxin] + O2 + H(+) = (25R)-3beta,4beta-dihydroxycholest-5-en-26-oate + 2 oxidized [adrenodoxin] + H2O. It carries out the reaction (25R)-4beta,26-dihydroxycholesterol + 2 reduced [adrenodoxin] + O2 + 2 H(+) = (25R)-3beta,4beta-dihydroxycholest-5-en-26-al + 2 oxidized [adrenodoxin] + 2 H2O. The catalysed reaction is 4beta-hydroxycholesterol + 2 reduced [adrenodoxin] + O2 + 2 H(+) = (25R)-4beta,26-dihydroxycholesterol + 2 oxidized [adrenodoxin] + H2O. The enzyme catalyses (25R)-3beta-hydroxy-5-cholesten-26-al + 2 reduced [adrenodoxin] + O2 + H(+) = (25R)-3beta-hydroxy-5-cholestenoate + 2 oxidized [adrenodoxin] + H2O. It catalyses the reaction (25R)-cholest-5-ene-3beta,26-diol + 2 reduced [adrenodoxin] + O2 + 2 H(+) = (25R)-3beta-hydroxy-5-cholesten-26-al + 2 oxidized [adrenodoxin] + 2 H2O. It carries out the reaction (25R)-3alpha,7alpha,12alpha-trihydroxy-5beta-cholestan-26-al + 2 reduced [adrenodoxin] + O2 + H(+) = (25R)-3alpha,7alpha,12alpha-trihydroxy-5beta-cholestan-26-oate + 2 oxidized [adrenodoxin] + H2O. The catalysed reaction is 5beta-cholestane-3alpha,7alpha,12alpha-triol + 2 reduced [adrenodoxin] + O2 + 2 H(+) = (25R)-5beta-cholestane-3alpha,7alpha,12alpha,26-tetrol + 2 oxidized [adrenodoxin] + H2O. It functions in the pathway hormone biosynthesis; cholecalciferol biosynthesis. Its pathway is steroid metabolism; cholesterol degradation. The protein operates within lipid metabolism; bile acid biosynthesis. Functionally, cytochrome P450 monooxygenase that catalyzes regio- and stereospecific hydroxylation of cholesterol and its derivatives. Hydroxylates (with R stereochemistry) the terminal methyl group of cholesterol side-chain in a three step reaction to yield at first a C26 alcohol, then a C26 aldehyde and finally a C26 acid. Regulates cholesterol homeostasis by catalyzing the conversion of excess cholesterol to bile acids via both the 'neutral' (classic) and the 'acid' (alternative) pathways. May also regulate cholesterol homeostasis via generation of active oxysterols, which act as ligands for NR1H2 and NR1H3 nuclear receptors, modulating the transcription of genes involved in lipid metabolism. Plays a role in cholestanol metabolism in the cerebellum. Similarly to cholesterol, hydroxylates cholestanol and may facilitate sterol diffusion through the blood-brain barrier to the systemic circulation for further degradation. Also hydroxylates retinal 7-ketocholesterol, a noxious oxysterol with pro-inflammatory and pro-apoptotic effects, and may play a role in its elimination from the retinal pigment epithelium. May play a redundant role in vitamin D biosynthesis. Catalyzes 25-hydroxylation of vitamin D3 that is required for its conversion to a functionally active form. The chain is Sterol 26-hydroxylase, mitochondrial (CYP27A1) from Oryctolagus cuniculus (Rabbit).